Here is a 5058-residue protein sequence, read N- to C-terminus: ATP-binding cassette sub-family A member 13 (5058 aa).

7 helical membrane passes run 23–43 (PVLF…LTVL), 3568–3588 (VGFF…ASMV), 3607–3627 (GVHP…VLTI), 3648–3668 (FIVF…SYLL), 3679–3699 (ALCT…LLVL), 3709–3729 (TFLC…ITFL), and 3752–3772 (FGWV…CGWY). Positions 3842–4074 (VTLVSVTKEY…YGQGLRLTLT (233 aa)) constitute an ABC transporter 1 domain. An ATP-binding site is contributed by 3875–3882 (GTNGAGKT). 7 consecutive transmembrane segments (helical) span residues 4226 to 4246 (TLAD…LFMV), 4458 to 4478 (VALC…SSVV), 4504 to 4524 (FLYD…VIVA), 4536 to 4556 (LAAT…WMYL), 4568 to 4588 (FISY…ITIM), 4607 to 4627 (VLKW…LVEL), and 4651 to 4671 (MNFL…LLLL). The ABC transporter 2 domain occupies 4718 to 4956 (LVLYNLSKHY…FGDGYTVKVW (239 aa)). 4754–4761 (GVNGAGKS) contributes to the ATP binding site.

Belongs to the ABC transporter superfamily. Significantly expressed in the bone marrow, trachea, testis, thyroid and lung as well as in skin fibroblasts.

The protein resides in the cytoplasmic vesicle membrane. It catalyses the reaction cholesterol(in) + ATP + H2O = cholesterol(out) + ADP + phosphate + H(+). In terms of biological role, may mediate the cholesterol and gangliosides transport from the plasma membrane to intracellular vesicles in an ATP hydrolysis dependent manner, thus playing a role in their internalization by endocytic retrograde transport and may also participate in the endocytosis of synaptic vesicle in cortical neurons. The polypeptide is ATP-binding cassette sub-family A member 13 (Homo sapiens (Human)).